A 240-amino-acid polypeptide reads, in one-letter code: tRNA (guanine-N(1)-)-methyltransferase (240 aa).

S-adenosyl-L-methionine is bound by residues G111 and 130-135; that span reads IGDYVI.

This sequence belongs to the RNA methyltransferase TrmD family. In terms of assembly, homodimer.

It localises to the cytoplasm. It catalyses the reaction guanosine(37) in tRNA + S-adenosyl-L-methionine = N(1)-methylguanosine(37) in tRNA + S-adenosyl-L-homocysteine + H(+). Its function is as follows. Specifically methylates guanosine-37 in various tRNAs. The polypeptide is tRNA (guanine-N(1)-)-methyltransferase (Mycoplasma mycoides subsp. mycoides SC (strain CCUG 32753 / NCTC 10114 / PG1)).